The sequence spans 948 residues: Phosphoenolpyruvate carboxylase (948 aa).

Residues histidine 138 and lysine 610 contribute to the active site.

Belongs to the PEPCase type 1 family. The cofactor is Mg(2+).

It carries out the reaction oxaloacetate + phosphate = phosphoenolpyruvate + hydrogencarbonate. In terms of biological role, forms oxaloacetate, a four-carbon dicarboxylic acid source for the tricarboxylic acid cycle. The protein is Phosphoenolpyruvate carboxylase of Streptococcus gordonii (strain Challis / ATCC 35105 / BCRC 15272 / CH1 / DL1 / V288).